A 55-amino-acid polypeptide reads, in one-letter code: Large ribosomal subunit protein bL33 (55 aa).

This sequence belongs to the bacterial ribosomal protein bL33 family.

This Paramagnetospirillum magneticum (strain ATCC 700264 / AMB-1) (Magnetospirillum magneticum) protein is Large ribosomal subunit protein bL33.